We begin with the raw amino-acid sequence, 455 residues long: Glycylpeptide N-tetradecanoyltransferase (455 aa).

Residue 38–41 (HKFW) coordinates tetradecanoyl-CoA. The tract at residues 168–204 (INFLCVHKQLRSKRLTPVLIKEITRRVNKCDIWHALY) is myristoyl CoA-binding. The active-site Proton acceptor; via carboxylate is leucine 455.

The protein belongs to the NMT family. As to quaternary structure, monomer. Post-translationally, the N-terminus is blocked.

Its subcellular location is the cytoplasm. It carries out the reaction N-terminal glycyl-[protein] + tetradecanoyl-CoA = N-tetradecanoylglycyl-[protein] + CoA + H(+). With respect to regulation, inhibited by diethylpyrocarbonate. Competitively inhibited by S-(2-oxo)pentadecyl-CoA, a non hydrolysable myristoyl-CoA analog, and by SC-58272, a peptidomimetic derived from the N-terminal sequence of a natural substrate. Its function is as follows. Adds a myristoyl group to the N-terminal glycine residue of certain cellular proteins. Substrate specificity requires an N-terminal glycine in the nascent polypeptide substrates. Uncharged amino acids are preferred at position 2 while neutral residues are favored at positions 3 and 4. Ser is present at position 5 in almost all known N-myristoyl proteins and Lys is commonly encountered at postion 6. This chain is Glycylpeptide N-tetradecanoyltransferase (NMT1), found in Saccharomyces cerevisiae (strain ATCC 204508 / S288c) (Baker's yeast).